Here is a 780-residue protein sequence, read N- to C-terminus: ATP-dependent DNA helicase RecG (780 aa).

Domain regions lie at residues Met1 to Pro350, Lys351 to Pro549, and Gly550 to Gly780. The wedge domain stretch occupies residues Arg154 to Arg252. 8 residues coordinate ATP: Phe367, Leu369, Gly399, Ser400, Gly401, Lys402, Thr403, and Arg436. Residues Asp383–Ile544 enclose the Helicase ATP-binding domain. The DEAH box signature appears at Asp497 to His500. Positions Arg563 to Gly728 constitute a Helicase C-terminal domain.

The protein belongs to the helicase family. RecG subfamily. As to quaternary structure, monomer.

It catalyses the reaction Couples ATP hydrolysis with the unwinding of duplex DNA by translocating in the 3'-5' direction.. It carries out the reaction ATP + H2O = ADP + phosphate + H(+). Plays a critical role in recombination and DNA repair. Helps process Holliday junction intermediates to mature products by catalyzing branch migration. Has replication fork (Y-DNA) regression activity, unwinds stalled or blocked replication forks to make a HJ that can be resolved. Has a DNA unwinding activity characteristic of a DNA helicase with 3'-5' polarity. Might be a DNA translocase rather than a bona fide helicase. In Thermotoga maritima (strain ATCC 43589 / DSM 3109 / JCM 10099 / NBRC 100826 / MSB8), this protein is ATP-dependent DNA helicase RecG.